Here is a 188-residue protein sequence, read N- to C-terminus: Probable manganese efflux pump MntP (188 aa).

6 consecutive transmembrane segments (helical) span residues 3–23 (FTATVLLAFGMSMDAFAASIG), 41–61 (LIFGAVETLTPLIGWGLGILA), 66–86 (LEWNHWIAFVLLIFLGGRMII), 106–128 (WLLVTTAIATSLDAMAVGVGLAF), 143–163 (ATLIMSTLGMMIGRFIGPMLG), and 168–188 (ILGGVVLIGIGVQILWTHFHG).

The protein belongs to the MntP (TC 9.B.29) family.

The protein resides in the cell inner membrane. In terms of biological role, probably functions as a manganese efflux pump. This is Probable manganese efflux pump MntP from Salmonella typhimurium (strain LT2 / SGSC1412 / ATCC 700720).